The chain runs to 342 residues: Probable long-chain-alcohol O-fatty-acyltransferase 3 (342 aa).

A run of 8 helical transmembrane segments spans residues 9–29 (IKLW…STGI), 36–56 (LLSV…FSYV), 58–78 (FSGC…ILFS), 115–135 (IPIW…QMYE), 153–173 (IFLE…ITLG), 227–247 (MFLG…MLFF), 255–275 (TGEV…EVAV), and 297–317 (VGFV…SGII).

This sequence belongs to the wax synthase family.

The protein localises to the membrane. It catalyses the reaction a long chain fatty alcohol + a fatty acyl-CoA = a wax ester + CoA. Functionally, catalyzes the final step in the synthesis of long-chain linear esters (waxes). The chain is Probable long-chain-alcohol O-fatty-acyltransferase 3 (AT3) from Arabidopsis thaliana (Mouse-ear cress).